The following is an 813-amino-acid chain: MRVKDPSKDLPEKGKRNKRPLLPHDEDSSDDIAVGLTCQHVSYAVSVNHVKKAVAESLWSVCSECLKERRFCDGQPVLPADVWLCLKCGLQGCGKNSESQHSLRHFKSSGTESHCVVISLSTWVIWCYECNEKLSTHCNKKVLAQIVDFLQKHAFKTQTGAFSRIIKLCEEKREAGEIKKGKKGCTVPSVKGITNLGNTCFFNAVIQNLAQTYILFELMNEIKEDGTKFKISLSSAPQLEPLVVELSSPGPLTSALFLFLHSMKEAEKGPLSPKVLFNQLCQKAPRFKGFQQQDSQELLHHLLDAVRTEETKRIQASILKAFNNPTTKTADDETRKKVKAYGKEGVKMNFIDRIFIGELTSTVMCEECANISTMKDPFIDISLPIIEERVSKPVLLGKMSKCRSLQETDQDHNKGTVTVGNAHQPRASRKHSSPNDKNQLSHDRKHLRKWPSEEEKTVVTHPKNDNLEASPPASTLSTEASLNESLTDGSERDASLESSVDADSEASEPEIASKQPVLLRSRGDSCGHAEQHPHLPLASELPQAKETHGGEEEMAEAIAELHLSGTVTGNRDFHREKQPLNVPNNLCFSEGKHTRLHSAQNAFQTLSQSYVTTSKECSVQSCLYQFTSMELLMGNNKLLCEDCTEKRRKCHKETSSAEKKAGGVYTNARKQLLISAVPAILILHLKRFHQAGLSLRKVNRHVDFPLTLDLAPFCAATCKNISVGEKVLYGLYGIVEHSGSMRGGHYTAYVKVRVPSRKLSECITGRKTAAGLKEPDGELGGHWVHVSDTYVQVVPESRALSAQAYLLFYERIL.

Basic and acidic residues predominate over residues 1–14 (MRVKDPSKDLPEKG). Positions 1-27 (MRVKDPSKDLPEKGKRNKRPLLPHDED) are disordered. The interaction with ERCC1 stretch occupies residues 1 to 62 (MRVKDPSKDL…AVAESLWSVC (62 aa)). 2 positions are modified to phosphoserine: Ser-28 and Ser-29. The segment at 36-153 (LTCQHVSYAV…AQIVDFLQKH (118 aa)) adopts a UBP-type zinc-finger fold. Zn(2+) contacts are provided by Cys-38, His-40, Cys-62, Cys-65, Cys-85, Cys-88, Cys-93, His-101, His-105, His-114, Cys-127, and Cys-130. In terms of domain architecture, USP spans 191-812 (KGITNLGNTC…QAYLLFYERI (622 aa)). Cys-200 serves as the catalytic Nucleophile. 2 stretches are compositionally biased toward basic and acidic residues: residues 405–414 (LQETDQDHNK) and 450–466 (WPSEEEKTVVTHPKNDN). Positions 405–552 (LQETDQDHNK…QAKETHGGEE (148 aa)) are disordered. The segment covering 472 to 488 (PASTLSTEASLNESLTD) has biased composition (polar residues). Phosphoserine is present on residues Ser-507 and Ser-525. Basic and acidic residues predominate over residues 521-533 (SRGDSCGHAEQHP). Residue His-745 is the Proton acceptor of the active site.

The protein belongs to the peptidase C19 family. As to quaternary structure, interacts with ERCC1. The catalytically active form interacts with SPDL1. In terms of tissue distribution, retina.

It localises to the photoreceptor inner segment. The protein localises to the cytoplasm. The protein resides in the nucleus. It carries out the reaction Thiol-dependent hydrolysis of ester, thioester, amide, peptide and isopeptide bonds formed by the C-terminal Gly of ubiquitin (a 76-residue protein attached to proteins as an intracellular targeting signal).. Its function is as follows. Catalyzes the deubiquitination of SPDL1. Plays a role in the repair of UV-induced DNA damage via deubiquitination of ERCC1, promoting its recruitment to DNA damage sites. May be involved in the maintenance of photoreceptor function. May play a role in normal retinal development. Plays a role in cell migration. The sequence is that of Ubiquitin carboxyl-terminal hydrolase 45 (Usp45) from Mus musculus (Mouse).